Here is a 133-residue protein sequence, read N- to C-terminus: Fluoride-specific ion channel FluC (133 aa).

4 helical membrane-spanning segments follow: residues 4-24 (LLWI…LSVL), 35-55 (WGTL…WVLA), 66-86 (VFIF…SLES), and 107-127 (VLGL…LGGP). Na(+) contacts are provided by Gly-74 and Thr-77.

It belongs to the fluoride channel Fluc/FEX (TC 1.A.43) family.

It is found in the cell inner membrane. It carries out the reaction fluoride(in) = fluoride(out). With respect to regulation, na(+) is not transported, but it plays an essential structural role and its presence is essential for fluoride channel function. Its function is as follows. Fluoride-specific ion channel. Important for reducing fluoride concentration in the cell, thus reducing its toxicity. The protein is Fluoride-specific ion channel FluC of Salinibacter ruber (strain DSM 13855 / M31).